A 279-amino-acid chain; its full sequence is Four and a half LIM domains protein 2 (279 aa).

The segment at 7–31 (CHHCNESLYGKKYILKEENPHCVAC) adopts a C4-type zinc-finger fold. 3 consecutive LIM zinc-binding domains span residues 40–92 (CEEC…CTDC), 101–153 (CQEC…CVPC), and 162–212 (CVQC…CLTC). Lys78 participates in a covalent cross-link: Glycyl lysine isopeptide (Lys-Gly) (interchain with G-Cter in SUMO2). Glycyl lysine isopeptide (Lys-Gly) (interchain with G-Cter in SUMO2) cross-links involve residues Lys167 and Lys220. The region spanning 221-275 (CAGCTNPISGLGGTKYISFEERQWHNDCFNCKKCSLSLVGRGFLTERDDILCPDC) is the LIM zinc-binding 4 domain. Ser238 is subject to Phosphoserine.

In terms of assembly, interacts with ZNF638 and TTN/titin. Interacts with E4F1. Interacts with GRB7. Interacts with SIRT1 and FOXO1. Interacts with CEFIP. Interacts with calcineurin. Interacts with FOXK1. Highly expressed in heart but also detectable in brain and skeletal muscle.

It is found in the cytoplasm. The protein resides in the nucleus. Its subcellular location is the myofibril. It localises to the sarcomere. The protein localises to the z line. Its function is as follows. May function as a molecular transmitter linking various signaling pathways to transcriptional regulation. Negatively regulates the transcriptional repressor E4F1 and may function in cell growth. Inhibits the transcriptional activity of FOXO1 and its apoptotic function by enhancing the interaction of FOXO1 with SIRT1 and FOXO1 deacetylation. Negatively regulates the calcineurin/NFAT signaling pathway in cardiomyocytes. The polypeptide is Four and a half LIM domains protein 2 (Fhl2) (Mus musculus (Mouse)).